The sequence spans 322 residues: MNRTLQPDRGASQTAPAAHQARAFAPASVANVAVGFDLLGYPMDQVGDTVTVRRIDTPQVRIAAIRGIAQPLPLQTERNTAGAALLSMHRDLALPFGFELEIDKGIPLSSGMGGSAASCVAALLAANALLEEPLRREHLYRYALDGEAVASGSRHGDNLGPLFLGGLVLCTLERLVPVTVPAAWHSLLVHPDTLLETRRAREVLKDPYLLPDIVTQSANLALVLAGCYHGDAELVRAGLRDVLIEPRRAPLIAGFTAAQQAALQADAMGASISGAGPSVFAWFQTRSAAEAAAPAVRAAFTAAGFDSQAWVTPLISPGARLL.

Residue 107-117 (PLSSGMGGSAA) participates in ATP binding.

The protein belongs to the GHMP kinase family. Homoserine kinase subfamily.

It localises to the cytoplasm. It carries out the reaction L-homoserine + ATP = O-phospho-L-homoserine + ADP + H(+). It participates in amino-acid biosynthesis; L-threonine biosynthesis; L-threonine from L-aspartate: step 4/5. Functionally, catalyzes the ATP-dependent phosphorylation of L-homoserine to L-homoserine phosphate. The polypeptide is Homoserine kinase (Xylella fastidiosa (strain 9a5c)).